Here is a 567-residue protein sequence, read N- to C-terminus: DNA ligase B (567 aa).

Catalysis depends on Lys-132, which acts as the N6-AMP-lysine intermediate.

This sequence belongs to the NAD-dependent DNA ligase family. LigB subfamily.

It carries out the reaction NAD(+) + (deoxyribonucleotide)n-3'-hydroxyl + 5'-phospho-(deoxyribonucleotide)m = (deoxyribonucleotide)n+m + AMP + beta-nicotinamide D-nucleotide.. Functionally, catalyzes the formation of phosphodiester linkages between 5'-phosphoryl and 3'-hydroxyl groups in double-stranded DNA using NAD as a coenzyme and as the energy source for the reaction. The polypeptide is DNA ligase B (Yersinia pestis bv. Antiqua (strain Angola)).